The following is a 65-amino-acid chain: uncharacterized protein (65 aa).

The N-terminal stretch at 1 to 22 is a signal peptide; sequence MKFIKLFTFLVYLFVTLTNVFA.

This is an uncharacterized protein from Invertebrate iridescent virus 6 (IIV-6).